The chain runs to 28 residues: SLQAATEWLKANNQRGFLGEMGAGSNAD.

The Nucleophile role is filled by glutamate 20.

It belongs to the glycosyl hydrolase 5 (cellulase A) family.

The protein localises to the cell membrane. It catalyses the reaction Endohydrolysis of (1-&gt;4)-beta-D-glucosidic linkages in cellulose, lichenin and cereal beta-D-glucans.. This Schizophyllum commune (Split gill fungus) protein is Endoglucanase.